Reading from the N-terminus, the 142-residue chain is Hemoglobin subunit zeta (142 aa).

At Ser-2 the chain carries N-acetylserine. The Globin domain maps to 2-142 (SLTKTEGTII…VSSVLTEKYR (141 aa)). Thr-29 carries the phosphothreonine modification. The residue at position 53 (Ser-53) is a Phosphoserine. Position 59 (His-59) interacts with heme b. Residues Ser-73 and Ser-82 each carry the phosphoserine modification. Residue His-88 participates in heme b binding.

Belongs to the globin family. Heterotetramer of two zeta chains and beta-type chains.

Functionally, the zeta chain is an alpha-type chain of mammalian embryonic hemoglobin. The protein is Hemoglobin subunit zeta (HBZ1) of Pan troglodytes (Chimpanzee).